The sequence spans 548 residues: Acetolactate synthase isozyme 2 large subunit (548 aa).

E47 provides a ligand contact to thiamine diphosphate. Residues R149, 251–272, and 294–313 contribute to the FAD site; these read HGTK…VGAR and DIDP…LQGD. Residues 377-457 form a thiamine pyrophosphate binding region; that stretch reads QHQMWAAQHI…LKIVLLDNQR (81 aa). D428 and N455 together coordinate Mg(2+).

Belongs to the TPP enzyme family. As to quaternary structure, tetramer of two large (IlvG) and two small (IlvM) chains. It depends on FAD as a cofactor. The cofactor is Mg(2+). Requires thiamine diphosphate as cofactor.

The enzyme catalyses 2 pyruvate + H(+) = (2S)-2-acetolactate + CO2. Its pathway is amino-acid biosynthesis; L-isoleucine biosynthesis; L-isoleucine from 2-oxobutanoate: step 1/4. It functions in the pathway amino-acid biosynthesis; L-valine biosynthesis; L-valine from pyruvate: step 1/4. With respect to regulation, inhibited by the herbicides chlorimuron ethyl, chlorsulfuron and imazapyr. Its function is as follows. Catalyzes the first step in the biosynthesis of branched-chain amino acids. The chain is Acetolactate synthase isozyme 2 large subunit (ilvG) from Escherichia coli (strain K12).